The following is a 167-amino-acid chain: Ureidoglycolate lyase (167 aa).

Belongs to the ureidoglycolate lyase family. In terms of assembly, homodimer. Ni(2+) is required as a cofactor.

It carries out the reaction (S)-ureidoglycolate = urea + glyoxylate. It participates in nitrogen metabolism; (S)-allantoin degradation. Functionally, catalyzes the catabolism of the allantoin degradation intermediate (S)-ureidoglycolate, generating urea and glyoxylate. Involved in the utilization of allantoin as nitrogen source. The protein is Ureidoglycolate lyase of Pseudomonas putida (strain W619).